The primary structure comprises 339 residues: UDP-3-O-acylglucosamine N-acyltransferase (339 aa).

The active-site Proton acceptor is H248.

This sequence belongs to the transferase hexapeptide repeat family. LpxD subfamily. In terms of assembly, homotrimer.

It carries out the reaction a UDP-3-O-[(3R)-3-hydroxyacyl]-alpha-D-glucosamine + a (3R)-hydroxyacyl-[ACP] = a UDP-2-N,3-O-bis[(3R)-3-hydroxyacyl]-alpha-D-glucosamine + holo-[ACP] + H(+). The protein operates within bacterial outer membrane biogenesis; LPS lipid A biosynthesis. Functionally, catalyzes the N-acylation of UDP-3-O-acylglucosamine using 3-hydroxyacyl-ACP as the acyl donor. Is involved in the biosynthesis of lipid A, a phosphorylated glycolipid that anchors the lipopolysaccharide to the outer membrane of the cell. This Caulobacter vibrioides (strain NA1000 / CB15N) (Caulobacter crescentus) protein is UDP-3-O-acylglucosamine N-acyltransferase.